We begin with the raw amino-acid sequence, 565 residues long: Salicyl-AMP ligase / salicyl-S-ArCP synthetase (565 aa).

ATP-binding residues include Gly-214, Gly-330, Val-352, Asp-436, Arg-451, and Lys-542.

This sequence belongs to the ATP-dependent AMP-binding enzyme family.

The catalysed reaction is salicylate + ATP + H(+) = 2-hydroxybenzoyl-5'-AMP + diphosphate. The enzyme catalyses 2-hydroxybenzoyl-5'-AMP + holo-[ACP] = salicyl-[ACP] + AMP + H(+). The protein operates within siderophore biosynthesis; mycobactin biosynthesis. Inhibited by salicyl-AMS, an acyl-AMP analog. Also inhibited by 5'-O-[(N-acyl)sulfamoyl]adenosines. Involved in the initial steps of the mycobactin biosynthetic pathway. Catalyzes the salicylation of the aryl carrier protein (ArCP) domain of MbtB through a two-step reaction. The first step is the ATP-dependent adenylation of salicylate to generate a salicyl-AMP intermediate. The second step is the transfer of this activated salicylate to MbtB to form a salicyl-ArCP domain thioester. The chain is Salicyl-AMP ligase / salicyl-S-ArCP synthetase from Mycobacterium tuberculosis (strain ATCC 25618 / H37Rv).